A 249-amino-acid chain; its full sequence is tRNA pseudouridine synthase A (249 aa).

Asp53 functions as the Nucleophile in the catalytic mechanism. Residue Tyr111 participates in substrate binding.

The protein belongs to the tRNA pseudouridine synthase TruA family. In terms of assembly, homodimer.

The enzyme catalyses uridine(38/39/40) in tRNA = pseudouridine(38/39/40) in tRNA. In terms of biological role, formation of pseudouridine at positions 38, 39 and 40 in the anticodon stem and loop of transfer RNAs. In Streptococcus equi subsp. equi (strain 4047), this protein is tRNA pseudouridine synthase A.